Here is a 684-residue protein sequence, read N- to C-terminus: UvrABC system protein C (684 aa).

The 80-residue stretch at 16–95 folds into the GIY-YIG domain; that stretch reads TDPGVYKFRD…IKRFDPRFNV (80 aa). In terms of domain architecture, UVR spans 208-243; the sequence is APVRKRVTQRMEEAAENLEFELAARLRDDLGAIDKL. Residues 332 to 352 are compositionally biased toward basic and acidic residues; that stretch reads EAAEDAKLERRGVDQESHAEP. Residues 332–357 are disordered; it reads EAAEDAKLERRGVDQESHAEPRQGNA.

Belongs to the UvrC family. Interacts with UvrB in an incision complex.

The protein resides in the cytoplasm. The UvrABC repair system catalyzes the recognition and processing of DNA lesions. UvrC both incises the 5' and 3' sides of the lesion. The N-terminal half is responsible for the 3' incision and the C-terminal half is responsible for the 5' incision. The polypeptide is UvrABC system protein C (Corynebacterium aurimucosum (strain ATCC 700975 / DSM 44827 / CIP 107346 / CN-1) (Corynebacterium nigricans)).